Consider the following 206-residue polypeptide: dITP/XTP pyrophosphatase (206 aa).

10-15 (SRNAKK) lines the substrate pocket. The Proton acceptor role is filled by D75. D75 is a Mg(2+) binding site. Substrate-binding positions include S76, 158 to 161 (FGYD), K181, and 186 to 187 (HR).

This sequence belongs to the HAM1 NTPase family. Homodimer. The cofactor is Mg(2+).

The catalysed reaction is XTP + H2O = XMP + diphosphate + H(+). It carries out the reaction dITP + H2O = dIMP + diphosphate + H(+). The enzyme catalyses ITP + H2O = IMP + diphosphate + H(+). In terms of biological role, pyrophosphatase that catalyzes the hydrolysis of nucleoside triphosphates to their monophosphate derivatives, with a high preference for the non-canonical purine nucleotides XTP (xanthosine triphosphate), dITP (deoxyinosine triphosphate) and ITP. Seems to function as a house-cleaning enzyme that removes non-canonical purine nucleotides from the nucleotide pool, thus preventing their incorporation into DNA/RNA and avoiding chromosomal lesions. This is dITP/XTP pyrophosphatase from Nocardia farcinica (strain IFM 10152).